The following is a 453-amino-acid chain: Ribulose bisphosphate carboxylase large chain (453 aa).

A propeptide spanning residues methionine 1–serine 2 is cleaved from the precursor. An N-acetylproline modification is found at proline 3. At lysine 14 the chain carries N6,N6,N6-trimethyllysine. Residues asparagine 123 and threonine 173 each contribute to the substrate site. Lysine 175 serves as the catalytic Proton acceptor. Lysine 177 is a substrate binding site. Residues lysine 201, aspartate 203, and glutamate 204 each coordinate Mg(2+). At lysine 201 the chain carries N6-carboxylysine. The active-site Proton acceptor is histidine 294. Positions 295, 327, and 379 each coordinate substrate.

The protein belongs to the RuBisCO large chain family. Type I subfamily. In terms of assembly, heterohexadecamer of 8 large chains and 8 small chains; disulfide-linked. The disulfide link is formed within the large subunit homodimers. Mg(2+) serves as cofactor. Post-translationally, the disulfide bond which can form in the large chain dimeric partners within the hexadecamer appears to be associated with oxidative stress and protein turnover.

The protein resides in the plastid. Its subcellular location is the chloroplast. The catalysed reaction is 2 (2R)-3-phosphoglycerate + 2 H(+) = D-ribulose 1,5-bisphosphate + CO2 + H2O. The enzyme catalyses D-ribulose 1,5-bisphosphate + O2 = 2-phosphoglycolate + (2R)-3-phosphoglycerate + 2 H(+). In terms of biological role, ruBisCO catalyzes two reactions: the carboxylation of D-ribulose 1,5-bisphosphate, the primary event in carbon dioxide fixation, as well as the oxidative fragmentation of the pentose substrate in the photorespiration process. Both reactions occur simultaneously and in competition at the same active site. This Asperula laevigata (Smooth woodruff) protein is Ribulose bisphosphate carboxylase large chain.